The following is a 624-amino-acid chain: DNA mismatch repair protein MutL (624 aa).

Belongs to the DNA mismatch repair MutL/HexB family.

This protein is involved in the repair of mismatches in DNA. It is required for dam-dependent methyl-directed DNA mismatch repair. May act as a 'molecular matchmaker', a protein that promotes the formation of a stable complex between two or more DNA-binding proteins in an ATP-dependent manner without itself being part of a final effector complex. The sequence is that of DNA mismatch repair protein MutL from Chlorobium phaeobacteroides (strain DSM 266 / SMG 266 / 2430).